The primary structure comprises 207 residues: Small ribosomal subunit protein uS4c (207 aa).

The S4 RNA-binding domain maps to 92–155 (MRLDNILFRL…TYQSILSKRI (64 aa)).

It belongs to the universal ribosomal protein uS4 family. In terms of assembly, part of the 30S ribosomal subunit. Contacts protein S5. The interaction surface between S4 and S5 is involved in control of translational fidelity.

It is found in the plastid. It localises to the chloroplast. One of the primary rRNA binding proteins, it binds directly to 16S rRNA where it nucleates assembly of the body of the 30S subunit. In terms of biological role, with S5 and S12 plays an important role in translational accuracy. The sequence is that of Small ribosomal subunit protein uS4c (rps4) from Equisetum giganteum (Giant horsetail).